Consider the following 307-residue polypeptide: Phosphonates import ATP-binding protein PhnC (307 aa).

An ABC transporter domain is found at 4-252 (IRIERLSKTF…RLHALYGDDA (249 aa)). ATP is bound at residue 37-44 (GASGSGKS). Residues 265–275 (AAREAAGEPAR) show a composition bias toward basic and acidic residues. A disordered region spans residues 265 to 307 (AAREAAGEPARRAPAAFDSAGSPDLPDSQPASPRRMLAASSMR).

Belongs to the ABC transporter superfamily. Phosphonates importer (TC 3.A.1.9.1) family. In terms of assembly, the complex is composed of two ATP-binding proteins (PhnC), two transmembrane proteins (PhnE) and a solute-binding protein (PhnD).

Its subcellular location is the cell inner membrane. It carries out the reaction phosphonate(out) + ATP + H2O = phosphonate(in) + ADP + phosphate + H(+). Functionally, part of the ABC transporter complex PhnCDE involved in phosphonates import. Responsible for energy coupling to the transport system. This chain is Phosphonates import ATP-binding protein PhnC, found in Burkholderia pseudomallei (strain 1710b).